The following is a 273-amino-acid chain: Protein BRANCHLESS TRICHOME (273 aa).

A compositionally biased stretch (polar residues) spans 1-12 (MKDMKMQSSPET). The disordered stretch occupies residues 1–30 (MKDMKMQSSPETMMTRIPTPDPHSTGVRED). A coiled-coil region spans residues 69 to 199 (IKVFMESELG…GERERNRMMK (131 aa)).

In terms of assembly, interacts with STI.

Functionally, acts as a key regulator of trichome branching. Could participate with STI in the same pathway. Also plays a role in integrating endoreplication levels with cell shape. The chain is Protein BRANCHLESS TRICHOME (BLT) from Arabidopsis thaliana (Mouse-ear cress).